A 418-amino-acid chain; its full sequence is Serine hydroxymethyltransferase (418 aa).

(6S)-5,6,7,8-tetrahydrofolate is bound by residues L121 and G125–L127. At K230 the chain carries N6-(pyridoxal phosphate)lysine. S355–F357 is a (6S)-5,6,7,8-tetrahydrofolate binding site.

Belongs to the SHMT family. In terms of assembly, homodimer. It depends on pyridoxal 5'-phosphate as a cofactor.

It is found in the cytoplasm. The catalysed reaction is (6R)-5,10-methylene-5,6,7,8-tetrahydrofolate + glycine + H2O = (6S)-5,6,7,8-tetrahydrofolate + L-serine. It functions in the pathway one-carbon metabolism; tetrahydrofolate interconversion. Its pathway is amino-acid biosynthesis; glycine biosynthesis; glycine from L-serine: step 1/1. Its function is as follows. Catalyzes the reversible interconversion of serine and glycine with tetrahydrofolate (THF) serving as the one-carbon carrier. This reaction serves as the major source of one-carbon groups required for the biosynthesis of purines, thymidylate, methionine, and other important biomolecules. Also exhibits THF-independent aldolase activity toward beta-hydroxyamino acids, producing glycine and aldehydes, via a retro-aldol mechanism. The sequence is that of Serine hydroxymethyltransferase from Streptococcus pneumoniae (strain P1031).